A 535-amino-acid polypeptide reads, in one-letter code: Importin subunit alpha-2 (535 aa).

In terms of domain architecture, IBB spans 1 to 58 (MSLRPNAKTEVRRNRYKVAVDAEEGRRRREDNMVEIRKSKREESLQKKRREGLQANQL). Basic and acidic residues predominate over residues 20-46 (VDAEEGRRRREDNMVEIRKSKREESLQ). The segment at 20 to 67 (VDAEEGRRRREDNMVEIRKSKREESLQKKRREGLQANQLPQFAPSPVP) is disordered. 10 ARM repeats span residues 67 to 106 (PASSTVEKKLESLPAMVGGVWSDDRSLQLEATTQFRKLLS), 110 to 150 (SPPI…NIAS), 153 to 192 (SENTKVVIEHGAVPIFVQLLASQSDDVREQAVWALGNVAG), 195 to 235 (PRCR…NFCR), 237 to 276 (KPQPPFDQVRPALPALERLIHSTDEEVLTDACWALSYLSD), 279 to 318 (NDKIQSVIEAGVVPRLVELLQHQSPSVLIPALRSIGNIVT), 321 to 361 (DLQT…NITA), 364 to 403 (RDQIQAVCEAGLICPLVNLLQNAEFDIKKEAAWAISNATS), 407 to 446 (PDQIKYMVEQGVVKPLCDLLVCPDPRIITVCLEGLENILK), and 461 to 500 (NFYAQLIDDAEGLEKIENLQSHDNSEIYEKAVKILETYWL).

The protein belongs to the importin alpha family. In terms of assembly, forms a complex with the importin subunit beta-1 KPNB1. Interacts with A.tumefaciens VirD2 and VirE2. Binds to SWO1.

The protein resides in the nucleus envelope. Its function is as follows. Binds to conventional NLS motifs and mediates nuclear protein import across the nuclear envelope. Involved in the maintenance of cell wall integrity under salt stress via interaction with SWO1. Acts as a cellular receptor for the nuclear import of the virD2 protein of Agrobacterium, but is not essential for Agrobacterium-mediated root transformation. The chain is Importin subunit alpha-2 from Arabidopsis thaliana (Mouse-ear cress).